We begin with the raw amino-acid sequence, 177 residues long: CDP-archaeol synthase (177 aa).

Helical transmembrane passes span 6 to 26 (LFAS…ACIF), 54 to 74 (CIFG…LVDF), 90 to 110 (VILA…GSFI), 124 to 144 (LLDQ…VAPI), and 148 to 168 (MIII…IIAY).

This sequence belongs to the CDP-archaeol synthase family. It depends on Mg(2+) as a cofactor.

The protein localises to the cell membrane. It catalyses the reaction 2,3-bis-O-(geranylgeranyl)-sn-glycerol 1-phosphate + CTP + H(+) = CDP-2,3-bis-O-(geranylgeranyl)-sn-glycerol + diphosphate. It functions in the pathway membrane lipid metabolism; glycerophospholipid metabolism. Catalyzes the formation of CDP-2,3-bis-(O-geranylgeranyl)-sn-glycerol (CDP-archaeol) from 2,3-bis-(O-geranylgeranyl)-sn-glycerol 1-phosphate (DGGGP) and CTP. This reaction is the third ether-bond-formation step in the biosynthesis of archaeal membrane lipids. This Methanocaldococcus jannaschii (strain ATCC 43067 / DSM 2661 / JAL-1 / JCM 10045 / NBRC 100440) (Methanococcus jannaschii) protein is CDP-archaeol synthase.